Here is a 279-residue protein sequence, read N- to C-terminus: Proteasome subunit beta (279 aa).

The propeptide at 1–53 is removed in mature form; by autocatalysis; the sequence is MAAAFDPSGRLPDLFTSAGTSSFSAFLSMAAPELLPGRRPLPPGTAADLTPHA. The active-site Nucleophile is the Thr-54.

The protein belongs to the peptidase T1B family. The 20S proteasome core is composed of 14 alpha and 14 beta subunits that assemble into four stacked heptameric rings, resulting in a barrel-shaped structure. The two inner rings, each composed of seven catalytic beta subunits, are sandwiched by two outer rings, each composed of seven alpha subunits. The catalytic chamber with the active sites is on the inside of the barrel. Has a gated structure, the ends of the cylinder being occluded by the N-termini of the alpha-subunits. Is capped by the proteasome-associated ATPase, ARC.

The protein resides in the cytoplasm. It catalyses the reaction Cleavage of peptide bonds with very broad specificity.. The protein operates within protein degradation; proteasomal Pup-dependent pathway. The formation of the proteasomal ATPase ARC-20S proteasome complex, likely via the docking of the C-termini of ARC into the intersubunit pockets in the alpha-rings, may trigger opening of the gate for substrate entry. Interconversion between the open-gate and close-gate conformations leads to a dynamic regulation of the 20S proteasome proteolysis activity. Its function is as follows. Component of the proteasome core, a large protease complex with broad specificity involved in protein degradation. The chain is Proteasome subunit beta from Salinispora arenicola (strain CNS-205).